The following is a 300-amino-acid chain: UDP-3-O-acyl-N-acetylglucosamine deacetylase (300 aa).

Residues His78, His237, and Asp241 each coordinate Zn(2+). His264 (proton donor) is an active-site residue.

The protein belongs to the LpxC family. Zn(2+) is required as a cofactor.

It catalyses the reaction a UDP-3-O-[(3R)-3-hydroxyacyl]-N-acetyl-alpha-D-glucosamine + H2O = a UDP-3-O-[(3R)-3-hydroxyacyl]-alpha-D-glucosamine + acetate. Its pathway is glycolipid biosynthesis; lipid IV(A) biosynthesis; lipid IV(A) from (3R)-3-hydroxytetradecanoyl-[acyl-carrier-protein] and UDP-N-acetyl-alpha-D-glucosamine: step 2/6. Catalyzes the hydrolysis of UDP-3-O-myristoyl-N-acetylglucosamine to form UDP-3-O-myristoylglucosamine and acetate, the committed step in lipid A biosynthesis. The protein is UDP-3-O-acyl-N-acetylglucosamine deacetylase of Acinetobacter baumannii (strain AB307-0294).